The following is a 161-amino-acid chain: RNA pyrophosphohydrolase (161 aa).

Positions 12–154 (PYRPGVGMMI…KRKLYQAVVK (143 aa)) constitute a Nudix hydrolase domain. The Nudix box signature appears at 46–67 (GGIVPGETPSIAAMREMLEEIG).

This sequence belongs to the Nudix hydrolase family. RppH subfamily. Requires a divalent metal cation as cofactor.

Its function is as follows. Accelerates the degradation of transcripts by removing pyrophosphate from the 5'-end of triphosphorylated RNA, leading to a more labile monophosphorylated state that can stimulate subsequent ribonuclease cleavage. The sequence is that of RNA pyrophosphohydrolase from Rickettsia typhi (strain ATCC VR-144 / Wilmington).